A 192-amino-acid chain; its full sequence is Ion-translocating oxidoreductase complex subunit A (192 aa).

6 consecutive transmembrane segments (helical) span residues 5-25 (LLLL…FLGL), 39-59 (IGMS…SFLV), 72-92 (LRTM…EMLV), 102-122 (ALGI…VALL), 134-154 (AIYG…FSAM), and 171-191 (AIAM…TGLV).

The protein belongs to the NqrDE/RnfAE family. In terms of assembly, the complex is composed of six subunits: RnfA, RnfB, RnfC, RnfD, RnfE and RnfG.

Its subcellular location is the cell inner membrane. In terms of biological role, part of a membrane-bound complex that couples electron transfer with translocation of ions across the membrane. This Shewanella amazonensis (strain ATCC BAA-1098 / SB2B) protein is Ion-translocating oxidoreductase complex subunit A.